Reading from the N-terminus, the 113-residue chain is Hydrogenase maturation factor HypA (113 aa).

A Ni(2+)-binding site is contributed by H2. Zn(2+)-binding residues include C73, C76, C89, and C92.

Belongs to the HypA/HybF family.

Functionally, involved in the maturation of [NiFe] hydrogenases. Required for nickel insertion into the metal center of the hydrogenase. In Cereibacter sphaeroides (strain ATCC 17023 / DSM 158 / JCM 6121 / CCUG 31486 / LMG 2827 / NBRC 12203 / NCIMB 8253 / ATH 2.4.1.) (Rhodobacter sphaeroides), this protein is Hydrogenase maturation factor HypA.